The primary structure comprises 542 residues: Phosphoacetylglucosamine mutase (542 aa).

The residue at position 1 (Met1) is an N-acetylmethionine. Thr62 carries the phosphothreonine modification. Ser64 acts as the Phosphoserine intermediate in catalysis. Mg(2+) is bound by residues Ser64, Asp276, Asp278, and Asp280. Ser64 is modified (phosphoserine). Substrate-binding positions include 370–372 (EAN), 496–500 (RPSGT), and Arg505.

Belongs to the phosphohexose mutase family. It depends on Mg(2+) as a cofactor. Found in many tissues except lung. Relatively high expression in pancreas, heart, liver, and placenta, and relatively low expression in brain, skeletal muscle and kidney.

The enzyme catalyses N-acetyl-alpha-D-glucosamine 1-phosphate = N-acetyl-D-glucosamine 6-phosphate. It functions in the pathway nucleotide-sugar biosynthesis; UDP-N-acetyl-alpha-D-glucosamine biosynthesis; N-acetyl-alpha-D-glucosamine 1-phosphate from alpha-D-glucosamine 6-phosphate (route I): step 2/2. Its function is as follows. Catalyzes the conversion of GlcNAc-6-P into GlcNAc-1-P during the synthesis of uridine diphosphate/UDP-GlcNAc, a sugar nucleotide critical to multiple glycosylation pathways including protein N- and O-glycosylation. This chain is Phosphoacetylglucosamine mutase, found in Homo sapiens (Human).